Here is a 638-residue protein sequence, read N- to C-terminus: Sodium- and chloride-dependent neutral and basic amino acid transporter B(0+) (638 aa).

At 1–44 (MDRLKCPNFFKCRQKEKVTASSENFHVGENDENQERGNWSKKSD) the chain is on the cytoplasmic side. 3 consecutive transmembrane segments (helical) span residues 45-65 (YLLS…FPYL), 72-92 (GAFL…LFFL), and 110-130 (ILPL…FVAI). The Extracellular portion of the chain corresponds to 131–230 (YYNVIIAYSL…RSSGMDETGV (100 aa)). N-linked (GlcNAc...) asparagine glycans are attached at residues N155, N163, N174, N185, N193, and N198. 2 consecutive transmembrane segments (helical) span residues 231-251 (VVWY…AALF) and 257-277 (SGKV…ILLI). N-linked (GlcNAc...) asparagine glycosylation occurs at N298. Helical transmembrane passes span 311-331 (AATQ…ALSS), 344-364 (IIVC…IFSI), 395-415 (LAQL…LLTL), 453-473 (ILFL…VHLI), 476-496 (FCAG…IIWI), 524-544 (CWFV…LVKF), and 559-579 (VALG…MAII). Over 580-638 (KIVQAEGNILQRIISCCRPASNWGPYLEKHRGERYRDMAEPAKETDHEIPTISGSTKPE) the chain is Cytoplasmic. Residues 618 to 628 (AEPAKETDHEI) are compositionally biased toward basic and acidic residues. Residues 618–638 (AEPAKETDHEIPTISGSTKPE) are disordered.

The protein belongs to the sodium:neurotransmitter symporter (SNF) (TC 2.A.22) family. SLC6A14 subfamily. In terms of tissue distribution, expressed in the distal region of the intestinal tract: cecum and colon.

It localises to the membrane. The protein localises to the apical cell membrane. It catalyses the reaction glycine(out) + chloride(out) + 2 Na(+)(out) = glycine(in) + chloride(in) + 2 Na(+)(in). It carries out the reaction L-leucine(out) + chloride(out) + 2 Na(+)(out) = L-leucine(in) + chloride(in) + 2 Na(+)(in). The catalysed reaction is L-glutamine(out) + chloride(out) + 2 Na(+)(out) = L-glutamine(in) + chloride(in) + 2 Na(+)(in). The enzyme catalyses L-arginine(out) + chloride(out) + 2 Na(+)(out) = L-arginine(in) + chloride(in) + 2 Na(+)(in). It catalyses the reaction (R)-carnitine(out) + chloride(out) + 2 Na(+)(out) = (R)-carnitine(in) + chloride(in) + 2 Na(+)(in). It carries out the reaction O-propanoyl-(R)-carnitine(out) + chloride(out) + 2 Na(+)(out) = O-propanoyl-(R)-carnitine(in) + chloride(in) + 2 Na(+)(in). The catalysed reaction is L-isoleucine(out) + chloride(out) + 2 Na(+)(out) = L-isoleucine(in) + chloride(in) + 2 Na(+)(in). The enzyme catalyses L-methionine(out) + chloride(out) + 2 Na(+)(out) = L-methionine(in) + chloride(in) + 2 Na(+)(in). It catalyses the reaction L-valine(out) + chloride(out) + 2 Na(+)(out) = L-valine(in) + chloride(in) + 2 Na(+)(in). It carries out the reaction L-alanine(out) + chloride(out) + 2 Na(+)(out) = L-alanine(in) + chloride(in) + 2 Na(+)(in). The catalysed reaction is L-serine(out) + chloride(out) + 2 Na(+)(out) = L-serine(in) + chloride(in) + 2 Na(+)(in). The enzyme catalyses L-cysteine(out) + chloride(out) + 2 Na(+)(out) = L-cysteine(in) + chloride(in) + 2 Na(+)(in). It catalyses the reaction L-asparagine(out) + chloride(out) + 2 Na(+)(out) = L-asparagine(in) + chloride(in) + 2 Na(+)(in). It carries out the reaction L-threonine(out) + chloride(out) + 2 Na(+)(out) = L-threonine(in) + chloride(in) + 2 Na(+)(in). The catalysed reaction is L-phenylalanine(out) + chloride(out) + 2 Na(+)(out) = L-phenylalanine(in) + chloride(in) + 2 Na(+)(in). The enzyme catalyses L-tryptophan(out) + chloride(out) + 2 Na(+)(out) = L-tryptophan(in) + chloride(in) + 2 Na(+)(in). It catalyses the reaction L-tyrosine(out) + chloride(out) + 2 Na(+)(out) = L-tyrosine(in) + chloride(in) + 2 Na(+)(in). It carries out the reaction L-histidine(out) + chloride(out) + 2 Na(+)(out) = L-histidine(in) + chloride(in) + 2 Na(+)(in). The catalysed reaction is L-lysine(out) + chloride(out) + 2 Na(+)(out) = L-lysine(in) + chloride(in) + 2 Na(+)(in). The enzyme catalyses O-butanoyl-(R)-carnitine(out) + chloride(out) + 2 Na(+)(out) = O-butanoyl-(R)-carnitine(in) + chloride(in) + 2 Na(+)(in). Its function is as follows. Amino acid transporter that plays an important role in the absorption of amino acids in the intestinal tract. Mediates the uptake of a broad range of neutral and cationic amino acids (with the exception of proline) in a Na(+)/Cl(-)-dependent manner. Transports non-alpha-amino acids such as beta-alanine with low affinity, and has a higher affinity for dipolar and cationic amino acids such as leucine and lysine. Can also transport carnitine, butyrylcarnitine and propionylcarnitine coupled to the transmembrane gradients of Na(+) and Cl(-). The sequence is that of Sodium- and chloride-dependent neutral and basic amino acid transporter B(0+) from Mus musculus (Mouse).